Reading from the N-terminus, the 77-residue chain is Integrin beta-2 (77 aa).

A disulfide bridge links C36 with C43. N54 carries N-linked (GlcNAc...) asparagine glycosylation.

Belongs to the integrin beta chain family. In terms of assembly, dimer of an alpha and beta subunit.

The protein resides in the membrane. In terms of biological role, integrins are a large family of cell surface glycoproteins that mediate cell to cell and cell to matrix adhesion. In Xenopus laevis (African clawed frog), this protein is Integrin beta-2 (itgb2).